The sequence spans 303 residues: Coenzyme PQQ synthesis protein B (303 aa).

It belongs to the PqqB family.

The protein operates within cofactor biosynthesis; pyrroloquinoline quinone biosynthesis. May be involved in the transport of PQQ or its precursor to the periplasm. The sequence is that of Coenzyme PQQ synthesis protein B from Pseudomonas putida (strain W619).